The following is a 267-amino-acid chain: Mediator of RNA polymerase II transcription subunit 8 (267 aa).

Coiled coils occupy residues 1–26 and 116–160; these read MQREEKQLEACLDALISQVSDIKNSL and DVEE…EERE. Residues 190–267 are disordered; the sequence is GLSNRRPPGQ…KSASMHPYQR (78 aa). A compositionally biased stretch (polar residues) spans 227–245; sequence PPNQQQQHMAGVSMSQGSQ.

The protein belongs to the Mediator complex subunit 8 family. As to quaternary structure, component of the Mediator complex. May be part of a multisubunit E3 ubiquitin-protein ligase complex.

It localises to the nucleus. Its pathway is protein modification; protein ubiquitination. Component of the Mediator complex, a coactivator involved in the regulated transcription of nearly all RNA polymerase II-dependent genes. Mediator functions as a bridge to convey information from gene-specific regulatory proteins to the basal RNA polymerase II transcription machinery. Mediator is recruited to promoters by direct interactions with regulatory proteins and serves as a scaffold for the assembly of a functional preinitiation complex with RNA polymerase II and the general transcription factors. May play a role as a target recruitment subunit in E3 ubiquitin-protein ligase complexes and thus in ubiquitination and subsequent proteasomal degradation of target proteins. The polypeptide is Mediator of RNA polymerase II transcription subunit 8 (med8) (Xenopus tropicalis (Western clawed frog)).